Consider the following 637-residue polypeptide: Transcription termination factor FttA (637 aa).

Residues 4 to 71 (EDVLLDLKHK…IAMRPDPRVL (68 aa)) are KHa. A KHb region spans residues 72–139 (ATPEDSISII…WIPKVVRTPP (68 aa)). A metallo-beta-lactamase N-terminus region spans residues 180–383 (WVRVTALGGC…VISEATYGNA (204 aa)). Zn(2+) contacts are provided by H242, H244, D246, H247, H329, and D352. Positions 384–578 (NAFQPALKDA…MEVQVVDGFS (195 aa)) are beta-Casp. A metallo-beta-lactamase C-terminus region spans residues 579–637 (GHSDRRQLMEYVKRMQPRPERVFTEHGDEKACVDLASSVYKKLKIETRALTNLETVRLL). H604 is a Zn(2+) binding site.

This sequence belongs to the metallo-beta-lactamase superfamily. RNA-metabolizing metallo-beta-lactamase-like family. FttA subfamily. In terms of assembly, homodimer. Interacts with RNA polymerase (RNAP), interacts with the Spt4-Spt5 complex. Zn(2+) is required as a cofactor.

Its function is as follows. Terminates transcription on the whole genome. Termination is linked to FttA-mediated RNA cleavage and does not require NTP hydrolysis. Cleaves endonucleolytically at the RNA exit channel of RNA polymerase (RNAP); the 5'-3' exonuclease activity of this protein degrades the nascent RNA released from RNAP. This Methanosarcina mazei (strain ATCC BAA-159 / DSM 3647 / Goe1 / Go1 / JCM 11833 / OCM 88) (Methanosarcina frisia) protein is Transcription termination factor FttA.